We begin with the raw amino-acid sequence, 255 residues long: 5-oxoprolinase subunit A 1 (255 aa).

Belongs to the LamB/PxpA family. In terms of assembly, forms a complex composed of PxpA, PxpB and PxpC.

It catalyses the reaction 5-oxo-L-proline + ATP + 2 H2O = L-glutamate + ADP + phosphate + H(+). Its function is as follows. Catalyzes the cleavage of 5-oxoproline to form L-glutamate coupled to the hydrolysis of ATP to ADP and inorganic phosphate. The chain is 5-oxoprolinase subunit A 1 from Bradyrhizobium diazoefficiens (strain JCM 10833 / BCRC 13528 / IAM 13628 / NBRC 14792 / USDA 110).